Reading from the N-terminus, the 356-residue chain is MKRLLNPTRLRLDWLRRSSIDVTTAPHVPVLCDTAIEYLQPVPGGTYFDMTFGAGGHTRRLLEKCPEAKVYALDRDPLAHQLARDMSESEEFKGRLIPLLGKFSDLPKLFKEHGLAKNSVDGMLFDFGCSSMQFDEAVRGFSISRDGPLDMRMDGGHSGGVTAADVLANVEEGDLVKILRMYGEEKAAKKIARGLVDARNALFKIETTKQLADIIENIMDGGTRKDKLRRPAHSATKTFQAIRIFVNNELNEINYGMVLANEILRVDGRLVTITFHSLEDTIVKRHINGNVLAGAANALPLKYSSHYAIDEPDILESLTKKSWKQLHRHVIVPDADEVARNTRSRSAKLRAAVKTN.

S-adenosyl-L-methionine contacts are provided by residues 55-57, D74, F103, D126, and Q133; that span reads GGH.

Belongs to the methyltransferase superfamily. RsmH family.

In terms of biological role, probable S-adenosyl-L-methionine-dependent methyltransferase. The polypeptide is Probable methyltransferase-like protein 15 homolog (Drosophila melanogaster (Fruit fly)).